A 467-amino-acid polypeptide reads, in one-letter code: Glutamine synthetase (467 aa).

In terms of domain architecture, GS beta-grasp spans 14–98; that stretch reads EEVEYVDIRF…VHCNVVEPDT (85 aa). Positions 106–467 constitute a GS catalytic domain; sequence PRGAAVKAEA…PVEYQMYYSC (362 aa). The Mg(2+) site is built by Glu-131 and Glu-133. Residue Asp-209 participates in ATP binding. Mg(2+)-binding residues include Glu-214 and Glu-221. Residues 265–266 and Gly-266 contribute to the L-glutamate site; that span reads NG. A Mg(2+)-binding site is contributed by His-270. Residues 272-274 and Ser-274 each bind ATP; that span reads NMS. 3 residues coordinate L-glutamate: Arg-320, Glu-326, and Arg-338. ATP is bound by residues Arg-338 and Arg-343. Glu-356 contacts Mg(2+). Position 358 (Arg-358) interacts with L-glutamate. Position 396 is an O-AMP-tyrosine (Tyr-396).

It belongs to the glutamine synthetase family. Oligomer of 12 subunits arranged in the form of two hexameric ring. It depends on Mg(2+) as a cofactor.

It localises to the cytoplasm. It catalyses the reaction L-glutamate + NH4(+) + ATP = L-glutamine + ADP + phosphate + H(+). Its activity is regulated as follows. The activity of this enzyme could be controlled by adenylation under conditions of abundant glutamine. Its function is as follows. Catalyzes the ATP-dependent biosynthesis of glutamine from glutamate and ammonia. This chain is Glutamine synthetase, found in Cereibacter sphaeroides (Rhodobacter sphaeroides).